The sequence spans 494 residues: MHVQSKAPKDLHPQAQMTMLQRLYKLGDMFTVDTWPLMDQMYLVANPKLAHQVSQDSSPFPKHPMITRFLKPLTGYNSVLAANDAKWKELRSLFAPGFSNAHLMTMVPLMVEKTEVFCDLLSEYAAKHELFSMEPMAARLTIDIIGIVVLGVDFKSLTRRDELVEAFRHLLDLLPNGQTLDINPVTHYLRRKYANTMDNYIRRVLRDRAANGANKKFRTLMDIAIERYEQLPNGSLFDCGFEQLAVDNLKTFVFAGHDTSSTTLSNIYHLLSKHPEVLAKVIEEHDQVLGKDTAAIGQLIRDQPSIINKLPYTTAVIRETLRLYPASGSLRMAPKDTTFHPDKAPAVTVPKGSLIWVGIHTIHHDAEFFPCPDEFHPERFMTAKTITLADGRTEAVTAGWNGHAPPADAYRPFEKGPRMCIGSEMAMIEIRVVLAMTLRRFRFESAYAEYRRRHPDEVEAAGGRTEAFGDEAYQVFSSTAKPKSGVPMYVYTKE.

Cys420 provides a ligand contact to heme.

It belongs to the cytochrome P450 family. Heme serves as cofactor.

It participates in secondary metabolite biosynthesis. Its function is as follows. Cytochrome P450 monooxygenase; part of the cluster that mediates the biosynthesis of acurin A, a highly reduced polyketide coupled to a serine via a peptide bond. The activities of the highly reducing polyketide synthase acrA and the nonribosomal peptide synthetase acrB are collectively responsible for the synthesis of the acurin A core structure with a heptaketide backbone produced by acrA covalently fused to a L-serine by acrB. After the formation of the PK-NRP hybrid product, it is detached from acrB by reductive release to set up the formation of the lactam ring by aldol condensation. The hydrolyase acrC then catalyzes water loss to generate a double bond in the ring. This double bond is probably reduced, which is followed by three oxidations at C-22 to generate the carboxylic acid moiety, involving probably the FAD-binding monooxygenase acrE and the cytochrome P450 monooxygenases acrD and acrF. Finally, a last methylation step performed by the O-methyltransferase acrG leads to the production of acurin A. The chain is Cytochrome P450 monooxygenase acrF from Aspergillus aculeatus (strain ATCC 16872 / CBS 172.66 / WB 5094).